The primary structure comprises 548 residues: Membrane protein insertase YidC (548 aa).

A helical membrane pass occupies residues 6-26 (NLLVIALLFVSFMIWQAWEQD). Residues 28-58 (NPQPQQQQTTQTTTTAAGSAADQGVPASGQG) are disordered. Residues 29–42 (PQPQQQQTTQTTTT) are compositionally biased toward low complexity. 4 helical membrane passes run 350-370 (FLGN…GIMY), 420-440 (LGGC…YYML), 458-478 (LSAQ…MFFI), and 499-519 (PVIF…YYIV).

This sequence belongs to the OXA1/ALB3/YidC family. Type 1 subfamily. Interacts with the Sec translocase complex via SecD. Specifically interacts with transmembrane segments of nascent integral membrane proteins during membrane integration.

Its subcellular location is the cell inner membrane. Its function is as follows. Required for the insertion and/or proper folding and/or complex formation of integral membrane proteins into the membrane. Involved in integration of membrane proteins that insert both dependently and independently of the Sec translocase complex, as well as at least some lipoproteins. Aids folding of multispanning membrane proteins. In Enterobacter sp. (strain 638), this protein is Membrane protein insertase YidC.